The primary structure comprises 194 residues: dCTP deaminase, dUMP-forming (194 aa).

DCTP contacts are provided by residues 104-109 (RSSLGR), Asp-122, 130-132 (TLE), Gln-151, Tyr-165, Lys-172, and Gln-176. The active-site Proton donor/acceptor is Glu-132.

This sequence belongs to the dCTP deaminase family. As to quaternary structure, homotrimer.

The enzyme catalyses dCTP + 2 H2O = dUMP + NH4(+) + diphosphate. The protein operates within pyrimidine metabolism; dUMP biosynthesis; dUMP from dCTP: step 1/1. In terms of biological role, bifunctional enzyme that catalyzes both the deamination of dCTP to dUTP and the hydrolysis of dUTP to dUMP without releasing the toxic dUTP intermediate. The polypeptide is dCTP deaminase, dUMP-forming (Dictyoglomus thermophilum (strain ATCC 35947 / DSM 3960 / H-6-12)).